Consider the following 409-residue polypeptide: MSQAPNRLTPFFENIEFERNDGKMILNFGPQHPSAHGQLKLVLELDGEKVVRAMPEVGFMHRGIEKMAENMTYQEFIPVTDRVDYIASVANNYAFCEAVERLCEIKVPRRAQIIRVILLELNRISSHLLFLATHALDIGAMTVFLYAFREREYVLDMIEKYCGARLTHSAVRIGGMPLDLPEGWFEEMLKFCEKFPKDIKIYEDLLSENRIWKMRLENVGVISKELALSSGCSGVMLRASGVKWDIRKEQPYLVYDEIDFEVPYAVAGDCYARYVLYMREMKECVKILKQCERLYRASSREILADAPEFVSPSKEQIMTQNYSLMQHFVLITQGIKPKRGEIYFASESPKGELGIYINSQGEASPYRLKIRTPSFSHCAIYEDLLVGQYIADIAAIIGSTNIILGEVDR.

It belongs to the complex I 49 kDa subunit family. In terms of assembly, NDH-1 is composed of 14 different subunits. Subunits NuoB, C, D, E, F, and G constitute the peripheral sector of the complex.

It localises to the cell inner membrane. It carries out the reaction a quinone + NADH + 5 H(+)(in) = a quinol + NAD(+) + 4 H(+)(out). Its function is as follows. NDH-1 shuttles electrons from NADH, via FMN and iron-sulfur (Fe-S) centers, to quinones in the respiratory chain. The immediate electron acceptor for the enzyme in this species is believed to be ubiquinone. Couples the redox reaction to proton translocation (for every two electrons transferred, four hydrogen ions are translocated across the cytoplasmic membrane), and thus conserves the redox energy in a proton gradient. The protein is NADH-quinone oxidoreductase subunit D of Campylobacter curvus (strain 525.92).